The primary structure comprises 428 residues: Glutamate-1-semialdehyde 2,1-aminomutase 1 (428 aa).

Position 267 is an N6-(pyridoxal phosphate)lysine (Lys267).

This sequence belongs to the class-III pyridoxal-phosphate-dependent aminotransferase family. HemL subfamily. As to quaternary structure, homodimer. The cofactor is pyridoxal 5'-phosphate.

The protein localises to the cytoplasm. It carries out the reaction (S)-4-amino-5-oxopentanoate = 5-aminolevulinate. Its pathway is porphyrin-containing compound metabolism; protoporphyrin-IX biosynthesis; 5-aminolevulinate from L-glutamyl-tRNA(Glu): step 2/2. The sequence is that of Glutamate-1-semialdehyde 2,1-aminomutase 1 (hemL1) from Staphylococcus aureus (strain NCTC 8325 / PS 47).